A 187-amino-acid chain; its full sequence is Nucleoside-triphosphatase THEP1 (187 aa).

ATP is bound by residues 9-16 (GRPGVGKT) and 100-107 (LIAIDEIG).

It belongs to the THEP1 NTPase family.

The catalysed reaction is a ribonucleoside 5'-triphosphate + H2O = a ribonucleoside 5'-diphosphate + phosphate + H(+). In terms of biological role, has nucleotide phosphatase activity towards ATP, GTP, CTP, TTP and UTP. May hydrolyze nucleoside diphosphates with lower efficiency. The protein is Nucleoside-triphosphatase THEP1 of Hyperthermus butylicus (strain DSM 5456 / JCM 9403 / PLM1-5).